The primary structure comprises 154 residues: uncharacterized protein (154 aa).

This is an uncharacterized protein from Bacillus subtilis (strain 168).